The sequence spans 71 residues: Translation initiation factor IF-1 (71 aa).

In terms of domain architecture, S1-like spans 1–71 (MSKQEMLSFS…LTKGRITFRG (71 aa)).

Belongs to the IF-1 family. Component of the 30S ribosomal translation pre-initiation complex which assembles on the 30S ribosome in the order IF-2 and IF-3, IF-1 and N-formylmethionyl-tRNA(fMet); mRNA recruitment can occur at any time during PIC assembly.

It localises to the cytoplasm. Its function is as follows. One of the essential components for the initiation of protein synthesis. Stabilizes the binding of IF-2 and IF-3 on the 30S subunit to which N-formylmethionyl-tRNA(fMet) subsequently binds. Helps modulate mRNA selection, yielding the 30S pre-initiation complex (PIC). Upon addition of the 50S ribosomal subunit IF-1, IF-2 and IF-3 are released leaving the mature 70S translation initiation complex. This Pelagibacter ubique (strain HTCC1062) protein is Translation initiation factor IF-1.